The sequence spans 210 residues: Guanylate kinase (210 aa).

Residues 5–183 (GILFVISAPS…AVEEFKSIIL (179 aa)) form the Guanylate kinase-like domain. 12 to 19 (APSGAGKT) contributes to the ATP binding site.

This sequence belongs to the guanylate kinase family.

The protein localises to the cytoplasm. It carries out the reaction GMP + ATP = GDP + ADP. Its function is as follows. Essential for recycling GMP and indirectly, cGMP. The chain is Guanylate kinase from Syntrophotalea carbinolica (strain DSM 2380 / NBRC 103641 / GraBd1) (Pelobacter carbinolicus).